Reading from the N-terminus, the 429-residue chain is Keratin, type I cytoskeletal 20 (429 aa).

The interval 1 to 26 (MDFSRRSFHRSLSSSSQGPALSTSGS) is disordered. The segment at 1–74 (MDFSRRSFHR…SNGGDLFGGN (74 aa)) is head. Low complexity predominate over residues 10 to 26 (RSLSSSSQGPALSTSGS). A phosphoserine mark is found at Ser-13, Ser-16, and Ser-26. Residues 75 to 110 (EKLAMQNLNDRLASYLEKVRSLEQSNSKLEAQIKQW) form a coil 1A region. An IF rod domain is found at 75–386 (EKLAMQNLND…RLLEGEDIKT (312 aa)). Positions 111 to 128 (YETNAPSTIRDYSSYYAQ) are linker 1. Positions 129–220 (IKELQDQIKD…KEHQEEVEVL (92 aa)) are coil 1B. The segment at 221-243 (RRQLGNNVNVEVDAAPGLNLGEI) is linker 12. The interval 244–382 (MNEMRQKYEI…ATYRRLLEGE (139 aa)) is coil 2. The tract at residues 383-429 (DIKTTEYQLNTLEAKDIKKTRKIKTVVEEVVDGKVVSSEVKEIEENI) is tail.

This sequence belongs to the intermediate filament family. Heterotetramer of two type I and two type II keratins. Associates with KRT8. Post-translationally, hyperphosphorylation at Ser-13 occurs during the early stages of apoptosis but becomes less prominent during the later stages. Phosphorylation at Ser-13 also increases in response to stress brought on by cell injury. Proteolytically cleaved by caspases during apoptosis. Cleavage occurs at Asp-233. In terms of tissue distribution, expressed predominantly in the intestinal epithelium in differentiated villus cells.

Functionally, plays a significant role in maintaining keratin filament organization in intestinal epithelia. When phosphorylated, plays a role in the secretion of mucin in the small intestine. In Rattus norvegicus (Rat), this protein is Keratin, type I cytoskeletal 20 (Krt20).